The primary structure comprises 443 residues: Chromosome partition protein MukF (443 aa).

Residues 209–237 (LDETSGNLRELQDVLNASGDKLQSQLLRI) are leucine-zipper.

It belongs to the MukF family. As to quaternary structure, interacts, and probably forms a ternary complex, with MukE and MukB via its C-terminal region. The complex formation is stimulated by calcium or magnesium. It is required for an interaction between MukE and MukB.

Its subcellular location is the cytoplasm. The protein localises to the nucleoid. In terms of biological role, involved in chromosome condensation, segregation and cell cycle progression. May participate in facilitating chromosome segregation by condensation DNA from both sides of a centrally located replisome during cell division. Not required for mini-F plasmid partitioning. Probably acts via its interaction with MukB and MukE. Overexpression results in anucleate cells. It has a calcium binding activity. In Glaesserella parasuis serovar 5 (strain SH0165) (Haemophilus parasuis), this protein is Chromosome partition protein MukF.